The following is a 355-amino-acid chain: MRFSDNLAKILDKYENLGNKLSSGIMGDEFVKASKEYAELEDVVAKIKEYNKAKSELEEANNFKLEVGLDNATLEMIEDEIYTLENSLPKLERAVKIALLPKDDADSKSAIIEVRAGSGGEEAALFAAVLFNMYQRYAELKGWRFEILAISDTGIGGYKEASASIKGKDVFSKLKFESGVHRVQRVPETESQGRIHTSAATVAVLPEAEEVDIKIEDKDLRIDTYRASGAGGQHVNTTDSAVRITHIPTGITVALQDEKSQHKNKAKALKILRARIYEEERRKKEQARADSRRGQVGSGDRSERIRTYNFPQGRVSDHRIHLTLYKIDEVVKNGQLDEFVEALIADDEAKKLLEI.

Gln233 carries the post-translational modification N5-methylglutamine. The span at 282–293 shows a compositional bias: basic and acidic residues; it reads RKKEQARADSRR. A disordered region spans residues 282 to 305; it reads RKKEQARADSRRGQVGSGDRSERI.

This sequence belongs to the prokaryotic/mitochondrial release factor family. Post-translationally, methylated by PrmC. Methylation increases the termination efficiency of RF1.

Its subcellular location is the cytoplasm. In terms of biological role, peptide chain release factor 1 directs the termination of translation in response to the peptide chain termination codons UAG and UAA. The polypeptide is Peptide chain release factor 1 (Rickettsia rickettsii (strain Iowa)).